The chain runs to 162 residues: Caveolin-2 (162 aa).

At Met-1–Lys-86 the chain is on the cytoplasmic side. At Tyr-19 the chain carries Phosphotyrosine; by SRC. Phosphoserine occurs at positions 20 and 23. Tyr-27 is subject to Phosphotyrosine; by SRC. Ser-36 bears the Phosphoserine mark. The segment at residues Phe-87–Leu-107 is an intramembrane region (helical). At Ser-108–Asp-162 the chain is on the cytoplasmic side.

Belongs to the caveolin family. As to quaternary structure, monomer or homodimer. Interacts with CAV1; the interaction forms a stable heterooligomeric complex that is required for targeting to lipid rafts and for caveolae formation. Tyrosine phosphorylated forms do not form heterooligomers with the Tyr-19-phosphorylated form existing as a monomer or dimer, and the Tyr-27-form as a monomer only. Interacts (tyrosine phosphorylated form) with the SH2 domain-containing proteins, RASA1, NCK1 and SRC. Interacts (tyrosine phosphorylated form) with INSR, the interaction (Tyr-27-phosphorylated form) is increased on insulin stimulation. Interacts (Tyr-19 phosphorylated form) with MAPK1 (phosphorylated form); the interaction, promoted by insulin, leads to nuclear location and MAPK1 activation. Interacts with STAT3; the interaction is increased on insulin-induced tyrosine phosphorylation leading to STAT activation. Post-translationally, phosphorylated on serine and tyrosine residues. CAV1 promotes phosphorylation on Ser-23 which then targets the complex to the plasma membrane, lipid rafts and caveolae. Phosphorylation on Ser-36 appears to modulate mitosis in endothelial cells. Phosphorylation on both Tyr-19 and Tyr-27 is required for insulin-induced 'Ser-727' phosphorylation of STAT3 and its activation. Phosphorylation on Tyr-19 is required for insulin-induced phosphorylation of MAPK1 and DNA binding of STAT3. Tyrosine phosphorylation is induced by both EGF and insulin (By. similarity).

It localises to the nucleus. It is found in the cytoplasm. The protein resides in the golgi apparatus membrane. The protein localises to the cell membrane. Its subcellular location is the membrane. It localises to the caveola. Functionally, may act as a scaffolding protein within caveolar membranes. Interacts directly with G-protein alpha subunits and can functionally regulate their activity. Acts as an accessory protein in conjunction with CAV1 in targeting to lipid rafts and driving caveolae formation. The Ser-36 phosphorylated form has a role in modulating mitosis in endothelial cells. Positive regulator of cellular mitogenesis of the MAPK signaling pathway. Required for the insulin-stimulated nuclear translocation and activation of MAPK1 and STAT3, and the subsequent regulation of cell cycle progression. In Otolemur garnettii (Small-eared galago), this protein is Caveolin-2 (CAV2).